We begin with the raw amino-acid sequence, 84 residues long: Small ribosomal subunit protein bS16 (84 aa).

This sequence belongs to the bacterial ribosomal protein bS16 family.

The protein is Small ribosomal subunit protein bS16 of Cupriavidus necator (strain ATCC 17699 / DSM 428 / KCTC 22496 / NCIMB 10442 / H16 / Stanier 337) (Ralstonia eutropha).